A 420-amino-acid chain; its full sequence is Histidine--tRNA ligase (420 aa).

It belongs to the class-II aminoacyl-tRNA synthetase family. In terms of assembly, homodimer.

The protein localises to the cytoplasm. The enzyme catalyses tRNA(His) + L-histidine + ATP = L-histidyl-tRNA(His) + AMP + diphosphate + H(+). In Ureaplasma parvum serovar 3 (strain ATCC 27815 / 27 / NCTC 11736), this protein is Histidine--tRNA ligase.